The chain runs to 453 residues: Adenosylmethionine-8-amino-7-oxononanoate aminotransferase (453 aa).

Residue 118 to 119 (GS) participates in pyridoxal 5'-phosphate binding. Substrate is bound at residue Y151. Residue D258 participates in pyridoxal 5'-phosphate binding. Substrate-binding residues include K287, G322, and R417. An N6-(pyridoxal phosphate)lysine modification is found at K287.

The protein belongs to the class-III pyridoxal-phosphate-dependent aminotransferase family. BioA subfamily. In terms of assembly, homodimer. Pyridoxal 5'-phosphate is required as a cofactor.

The protein localises to the cytoplasm. It carries out the reaction (8S)-8-amino-7-oxononanoate + S-adenosyl-L-methionine = S-adenosyl-4-methylsulfanyl-2-oxobutanoate + (7R,8S)-7,8-diammoniononanoate. The protein operates within cofactor biosynthesis; biotin biosynthesis; 7,8-diaminononanoate from 8-amino-7-oxononanoate (SAM route): step 1/1. In terms of biological role, catalyzes the transfer of the alpha-amino group from S-adenosyl-L-methionine (SAM) to 7-keto-8-aminopelargonic acid (KAPA) to form 7,8-diaminopelargonic acid (DAPA). It is the only aminotransferase known to utilize SAM as an amino donor. In Geobacter sulfurreducens (strain ATCC 51573 / DSM 12127 / PCA), this protein is Adenosylmethionine-8-amino-7-oxononanoate aminotransferase.